Here is a 495-residue protein sequence, read N- to C-terminus: Probable cytosol aminopeptidase (495 aa).

Lysine 266 and aspartate 271 together coordinate Mn(2+). Lysine 278 is a catalytic residue. Mn(2+) contacts are provided by aspartate 289, aspartate 348, and glutamate 350. Arginine 352 is a catalytic residue.

Belongs to the peptidase M17 family. Mn(2+) serves as cofactor.

It is found in the cytoplasm. The catalysed reaction is Release of an N-terminal amino acid, Xaa-|-Yaa-, in which Xaa is preferably Leu, but may be other amino acids including Pro although not Arg or Lys, and Yaa may be Pro. Amino acid amides and methyl esters are also readily hydrolyzed, but rates on arylamides are exceedingly low.. It catalyses the reaction Release of an N-terminal amino acid, preferentially leucine, but not glutamic or aspartic acids.. Its function is as follows. Presumably involved in the processing and regular turnover of intracellular proteins. Catalyzes the removal of unsubstituted N-terminal amino acids from various peptides. This Pseudomonas paraeruginosa (strain DSM 24068 / PA7) (Pseudomonas aeruginosa (strain PA7)) protein is Probable cytosol aminopeptidase.